Here is a 510-residue protein sequence, read N- to C-terminus: Ribonuclease Y (510 aa).

A helical membrane pass occupies residues 2–22 (IYIIFSSIFAGFILGFLVRVF). The region spanning 198-258 (TVASVELPND…IRKELAKRTL (61 aa)) is the KH domain. The 96-residue stretch at 324–419 (VLSHSKETAI…VQIADAISAS (96 aa)) folds into the HD domain.

Belongs to the RNase Y family.

It localises to the cell membrane. Endoribonuclease that initiates mRNA decay. This chain is Ribonuclease Y, found in Borrelia garinii subsp. bavariensis (strain ATCC BAA-2496 / DSM 23469 / PBi) (Borreliella bavariensis).